Consider the following 514-residue polypeptide: Uridylate cyclase (514 aa).

Guanylate cyclase domains lie at 49–190 and 286–428; these read VHMY…AKLA and VSLY…EKRQ. A ribonucleoside 5'-triphosphate contacts are provided by residues Tyr52, Arg105, Phe178, 184 to 188, and 291 to 296; these read NHAAK and DIDGFT. 3 residues coordinate Ca(2+): Asp291, Ile292, and Asp339. A Mn(2+)-binding site is contributed by Asp291. The segment at 495 to 514 is disordered; that stretch reads IRADERQVQPHSRQKVDGSR. Residues 496–514 show a composition bias toward basic and acidic residues; it reads RADERQVQPHSRQKVDGSR.

Belongs to the adenylyl cyclase class-4/guanylyl cyclase family. Pyrimidine cyclase subfamily. As to quaternary structure, monomer. A divalent metal cation is required as a cofactor.

The protein resides in the cytoplasm. The catalysed reaction is UTP = 3',5'-cyclic UMP + diphosphate. In terms of biological role, pycsar (pyrimidine cyclase system for antiphage resistance) provides immunity against bacteriophage. The pyrimidine cyclase (PycC) synthesizes cyclic nucleotides in response to infection; these serve as specific second messenger signals. The signals activate the adjacent effector, leading to bacterial cell death and abortive phage infection. A clade A Pycsar system. Its function is as follows. The pyrimidine cyclase gene of a two-gene Pycsar system, generates cyclic UMP (cUMP) from UTP, has little to no activity on ATP, CTP or GTP. Expression of this and adjacent effector PaPycTIR (AC P0DV41) probably confers resistance to bacteriophage. The genes are probably only expressed in response to bacteriophage infection. Does not have adenylyl or guanylyl cyclase activity. The protein is Uridylate cyclase of Pseudomonas aeruginosa.